The primary structure comprises 177 residues: R-phycoerythrin beta chain (177 aa).

Residues Cys50 and Cys61 each contribute to the phycourobilin site. An N4-methylasparagine modification is found at Asn72. The (2R,3E)-phycoerythrobilin site is built by Cys82 and Cys158.

This sequence belongs to the phycobiliprotein family. In terms of assembly, heterodimer of an alpha and a beta chain. Contains two covalently linked phycoerythrobilin chromophores and one covalently linked phycourobilin chromophore.

The protein resides in the plastid. The protein localises to the chloroplast thylakoid membrane. Its function is as follows. Light-harvesting photosynthetic bile pigment-protein from the phycobiliprotein complex. In Pyropia yezoensis (Susabi-nori), this protein is R-phycoerythrin beta chain (cpeB).